The chain runs to 263 residues: Antigen 10-3 (263 aa).

A signal peptide spans 1 to 21; it reads MNIYLIGILCIVGLIISQGST. Residues 70-207 form a disordered region; the sequence is GNKKDKQPTQ…QINDGTSDKP (138 aa). Over residues 78–90 the composition is skewed to low complexity; it reads TQKTTPKPTTPKQ. A run of 5 repeats spans residues 81-107, 108-134, 135-161, 162-188, and 189-206. Positions 81–189 are 5 X 27 AA tandem repeats; sequence TTPKPTTPKQ…TSDTHTIKRT (109 aa). Basic and acidic residues-rich tracts occupy residues 95–104, 122–131, 149–158, and 176–185; these read TSDKTSDTHT.

In Schistosoma mansoni (Blood fluke), this protein is Antigen 10-3.